A 1376-amino-acid chain; its full sequence is Mediator of RNA polymerase II transcription subunit 23 (1376 aa).

The segment covering 1346–1369 has biased composition (low complexity); the sequence is SNSSSVQQTSSASSPTAQSTAGAA. Positions 1346 to 1376 are disordered; it reads SNSSSVQQTSSASSPTAQSTAGAAIPLSVTQ.

Belongs to the Mediator complex subunit 23 family. In terms of assembly, component of the Mediator complex.

The protein resides in the nucleus. Its function is as follows. Component of the Mediator complex, a coactivator involved in the regulated transcription of nearly all RNA polymerase II-dependent genes. Mediator functions as a bridge to convey information from gene-specific regulatory proteins to the basal RNA polymerase II transcription machinery. Mediator is recruited to promoters by direct interactions with regulatory proteins and serves as a scaffold for the assembly of a functional preinitiation complex with RNA polymerase II and the general transcription factors. This is Mediator of RNA polymerase II transcription subunit 23 (med23) from Danio rerio (Zebrafish).